Here is a 347-residue protein sequence, read N- to C-terminus: GMP reductase (347 aa).

NADP(+) is bound at residue 108–131; sequence ADFEKTKQILDLNPALNFVCIDVA. K(+)-binding residues include Gly-181 and Gly-183. Cys-186 acts as the Thioimidate intermediate in catalysis. 216–239 is an NADP(+) binding site; sequence IVSDGGCTTPGDVAKAFGGGADFV.

It belongs to the IMPDH/GMPR family. GuaC type 1 subfamily. Homotetramer.

It carries out the reaction IMP + NH4(+) + NADP(+) = GMP + NADPH + 2 H(+). Catalyzes the irreversible NADPH-dependent deamination of GMP to IMP. It functions in the conversion of nucleobase, nucleoside and nucleotide derivatives of G to A nucleotides, and in maintaining the intracellular balance of A and G nucleotides. The sequence is that of GMP reductase from Shigella flexneri serotype 5b (strain 8401).